We begin with the raw amino-acid sequence, 226 residues long: Ethylene-responsive transcription factor-like protein At4g13040 (226 aa).

2 disordered regions span residues 63 to 109 (EERS…RKRV) and 195 to 226 (KKPK…SDKM). A compositionally biased stretch (basic residues) spans 97–109 (PPKRRKQHRRKRV). The AP2/ERF DNA-binding region spans 105 to 171 (RRKRVHNQEP…REPNFELSEE (67 aa)). Acidic residues predominate over residues 217–226 (EEEEQDSDKM).

The protein belongs to the AP2/ERF transcription factor family.

It is found in the nucleus. In terms of biological role, probably acts as a transcriptional activator. Binds to the GCC-box pathogenesis-related promoter element. May be involved in the regulation of gene expression by stress factors and by components of stress signal transduction pathways. In Arabidopsis thaliana (Mouse-ear cress), this protein is Ethylene-responsive transcription factor-like protein At4g13040.